An 86-amino-acid chain; its full sequence is Acyl carrier protein (86 aa).

Residues 10-85 enclose the Carrier domain; sequence DKIEQKVIEM…DVIKYIKERQ (76 aa). Position 45 is an O-(pantetheine 4'-phosphoryl)serine (serine 45).

The protein belongs to the acyl carrier protein (ACP) family. Post-translationally, 4'-phosphopantetheine is transferred from CoA to a specific serine of apo-ACP by AcpS. This modification is essential for activity because fatty acids are bound in thioester linkage to the sulfhydryl of the prosthetic group.

Its subcellular location is the cytoplasm. It functions in the pathway lipid metabolism; fatty acid biosynthesis. In terms of biological role, carrier of the growing fatty acid chain in fatty acid biosynthesis. The chain is Acyl carrier protein from Rickettsia prowazekii (strain Madrid E).